The chain runs to 1612 residues: uncharacterized protein (1612 aa).

Residues 23-52 (ENKNIEMTTLKDKKEMKNENLSKINVKKEN) adopt a coiled-coil conformation. Residues 46–93 (INVKKENHDKNHDKNHDKNHDKNHDKNHDKNHDKNHDKNHDKNHDKNH) are compositionally biased toward basic and acidic residues. Disordered regions lie at residues 46-94 (INVK…KNHV) and 369-400 (EDDN…HEIQ). The span at 375 to 394 (DNPLYSNNNTLKEQNTSTPL) shows a compositional bias: polar residues. The chain crosses the membrane as a helical span at residues 479-499 (FIVTLSEICLILTPHYVNIIN). Disordered stretches follow at residues 698-777 (TSLT…EKKL), 992-1037 (NELD…KNDP), 1091-1157 (SGKS…RNMS), and 1257-1291 (NQTT…NQDK). A compositionally biased stretch (basic and acidic residues) spans 708–777 (KNDEIKKTGE…KKKTGEEKKL (70 aa)). Low complexity-rich tracts occupy residues 996-1028 (NNNN…NNNN), 1102-1140 (SNNN…NSTN), and 1257-1271 (NQTT…QTSN). Coiled-coil stretches lie at residues 1338–1362 (YCNN…INNK), 1444–1469 (SNKK…IDND), and 1553–1601 (NMED…KFLT). Basic and acidic residues predominate over residues 1554–1566 (MEDEKNEKLNDKE). The disordered stretch occupies residues 1554-1612 (MEDEKNEKLNDKEGEYEDVTENLNEQEAEEEAEEEAEEEEEEEDKFLTPEHLPINVEIK). Acidic residues predominate over residues 1567 to 1597 (GEYEDVTENLNEQEAEEEAEEEAEEEEEEED).

The protein resides in the membrane. This is an uncharacterized protein from Plasmodium falciparum (isolate 3D7).